We begin with the raw amino-acid sequence, 284 residues long: Tropomyosin (284 aa).

A disordered region spans residues Met1–Thr39. Residues Met1–Tyr284 are a coiled coil. Residues Lys12 to Thr39 show a composition bias toward basic and acidic residues.

It belongs to the tropomyosin family. As to quaternary structure, homodimer.

Its function is as follows. Tropomyosin, in association with the troponin complex, plays a central role in the calcium dependent regulation of muscle contraction. The sequence is that of Tropomyosin (TM1) from Homarus americanus (American lobster).